We begin with the raw amino-acid sequence, 275 residues long: 4-deoxy-L-threo-5-hexosulose-uronate ketol-isomerase (275 aa).

Residues histidine 193, histidine 195, glutamate 200, and histidine 242 each coordinate Zn(2+).

Belongs to the KduI family. Zn(2+) serves as cofactor.

The catalysed reaction is 5-dehydro-4-deoxy-D-glucuronate = 3-deoxy-D-glycero-2,5-hexodiulosonate. The protein operates within glycan metabolism; pectin degradation; 2-dehydro-3-deoxy-D-gluconate from pectin: step 4/5. Functionally, catalyzes the isomerization of 5-dehydro-4-deoxy-D-glucuronate to 3-deoxy-D-glycero-2,5-hexodiulosonate. This is 4-deoxy-L-threo-5-hexosulose-uronate ketol-isomerase from Bacillus pumilus (strain SAFR-032).